We begin with the raw amino-acid sequence, 152 residues long: Transcriptional regulator MraZ (152 aa).

SpoVT-AbrB domains are found at residues 5–52 and 81–124; these read ATLV…PLPA and ASEC…DEQT.

This sequence belongs to the MraZ family. In terms of assembly, forms oligomers.

It localises to the cytoplasm. The protein localises to the nucleoid. Functionally, negatively regulates its own expression and that of the subsequent genes in the proximal part of the division and cell wall (dcw) gene cluster. Acts by binding directly to DNA. May also regulate the expression of genes outside the dcw cluster. The protein is Transcriptional regulator MraZ of Sodalis glossinidius (strain morsitans).